An 858-amino-acid polypeptide reads, in one-letter code: Leucine--tRNA ligase (858 aa).

The 'HIGH' region motif lies at Pro42 to His52. Positions Lys618 to Ser622 match the 'KMSKS' region motif. Lys621 provides a ligand contact to ATP.

Belongs to the class-I aminoacyl-tRNA synthetase family.

The protein localises to the cytoplasm. It carries out the reaction tRNA(Leu) + L-leucine + ATP = L-leucyl-tRNA(Leu) + AMP + diphosphate. This chain is Leucine--tRNA ligase, found in Photobacterium profundum (strain SS9).